The following is a 62-amino-acid chain: MYCLPVFIILLLLISSAPSTPPQPRNKDRVHLISLLDNHKQILQRDWNSCCGKNPGCCPWGK.

An N-terminal signal peptide occupies residues 1-19 (MYCLPVFIILLLLISSAPS). Positions 20–48 (TPPQPRNKDRVHLISLLDNHKQILQRDWN) are excised as a propeptide. Trp60 is subject to Tryptophan amide.

The protein belongs to the conotoxin T superfamily. Contains 2 disulfide bonds that can be either 'C1-C3, C2-C4' or 'C1-C4, C2-C3', since these disulfide connectivities have been observed for conotoxins with cysteine framework V (for examples, see AC P0DQQ7 and AC P81755). In terms of tissue distribution, expressed by the venom duct.

Its subcellular location is the secreted. This chain is Conotoxin Im5.1, found in Conus imperialis (Imperial cone).